We begin with the raw amino-acid sequence, 335 residues long: Phospho-N-acetylmuramoyl-pentapeptide-transferase (335 aa).

10 consecutive transmembrane segments (helical) span residues 3-23 (LTLIAGLISLLLTALIMPHFI), 53-73 (GGTVFLLVASFVSFLFAILFF), 78-98 (SMGLITGILAIVLIYGFIGFL), 118-138 (LSLQIVGGLIFYFLHVVPSGI), 143-163 (VFGFPVHLGLLYIFFVLFWVV), 175-195 (IDGLASISVVISLLTYSVIAI), 200-220 (YDVLLLCGIMIGALLGFFIFN), 226-246 (VFMGDVGSLALGAMLAAISIA), 251-271 (WTLLVIGLVYVFETSSVMLQV), and 314-334 (VDAFLWSVGAVSSLIVLAILY).

The protein belongs to the glycosyltransferase 4 family. MraY subfamily. Mg(2+) serves as cofactor.

The protein resides in the cell membrane. It carries out the reaction UDP-N-acetyl-alpha-D-muramoyl-L-alanyl-gamma-D-glutamyl-L-lysyl-D-alanyl-D-alanine + di-trans,octa-cis-undecaprenyl phosphate = Mur2Ac(oyl-L-Ala-gamma-D-Glu-L-Lys-D-Ala-D-Ala)-di-trans,octa-cis-undecaprenyl diphosphate + UMP. Its pathway is cell wall biogenesis; peptidoglycan biosynthesis. Its function is as follows. Catalyzes the initial step of the lipid cycle reactions in the biosynthesis of the cell wall peptidoglycan: transfers peptidoglycan precursor phospho-MurNAc-pentapeptide from UDP-MurNAc-pentapeptide onto the lipid carrier undecaprenyl phosphate, yielding undecaprenyl-pyrophosphoryl-MurNAc-pentapeptide, known as lipid I. This is Phospho-N-acetylmuramoyl-pentapeptide-transferase from Streptococcus uberis (strain ATCC BAA-854 / 0140J).